The chain runs to 461 residues: GTPase Der (461 aa).

2 consecutive EngA-type G domains span residues 25-188 (PVVA…PNVA) and 198-371 (RRVA…ASWD). GTP contacts are provided by residues 31–38 (GRPNVGKS), 78–82 (DTGGW), 140–143 (NKVD), 204–211 (GKPNVGKS), 251–255 (DTAGL), and 316–319 (NKWD). The KH-like domain occupies 372-454 (TRIATGPLNI…PIRINVRVRE (83 aa)).

Belongs to the TRAFAC class TrmE-Era-EngA-EngB-Septin-like GTPase superfamily. EngA (Der) GTPase family. Associates with the 50S ribosomal subunit.

Functionally, GTPase that plays an essential role in the late steps of ribosome biogenesis. The polypeptide is GTPase Der (Mycobacterium leprae (strain TN)).